A 272-amino-acid polypeptide reads, in one-letter code: Short-chain dehydrogenase srdC (272 aa).

NADP(+) contacts are provided by Ile15, Asp65, Arg127, Tyr173, Lys177, Val206, and Thr208. The active-site Proton donor is the Tyr173. Lys177 (lowers pKa of active site Tyr) is an active-site residue.

The protein belongs to the short-chain dehydrogenases/reductases (SDR) family.

Functionally, short-chain dehydrogenase; part of the gene cluster that mediates the biosynthesis of sordarial, a salicylic aldehyde structurally related to the phytotoxin pyriculol. The most interesting aspect of this pathway is formation of an aromatic product from the highly reducing polyketide synthase srdA. SrdA synthesizes a reduced polyketide chain from one molecule of acetyl-CoA and five molecules of malonyl-CoA. The polyketide chain is then reductively released as an aldehyde. The oxidoreductases srdC, srdD and srdE then oxidize one of the hydroxy groups to facilitate the intramolecular aldol condensation, followed by dehydration to yield a salicylic aldehyde. This aldehyde can undergo facile reduction by endogenous reductases to yield the alcohol 1-hydroxy-2-hydroxymethyl-3-pent-1,3-dienylbenzene. The flavin-dependent srdI counteract against the propensity of the aldehydes to be reduced under physiological conditions and is responsible for reoxidizing 1-hydroxy-2-hydroxymethyl-3-pent-1,3-dienylbenzene back to the salicylic aldehyde. This salicylic aldehyde is then selectively epoxidized by the cupin-domain-containing oxidoreductase srdB to yield the epoxide, which can be hydrolyzed stereoselectively by the hydrolase srdG to give the final product sordarial. In Neurospora crassa (strain ATCC 24698 / 74-OR23-1A / CBS 708.71 / DSM 1257 / FGSC 987), this protein is Short-chain dehydrogenase srdC.